The sequence spans 838 residues: Probable bifunctional folylpolyglutamate synthase/dihydropteroate synthase (838 aa).

Positions 1 to 418 (MEYHEAVNFL…LVVGSLYVVA (418 aa)) are folylpolyglutamate synthase. 46–52 (GSNGKGS) contributes to the ATP binding site. A disordered region spans residues 541–561 (AADAGEDDERGAGDASDAGHD). The 251-residue stretch at 569–819 (TAVMGILNVT…DVPENVAAVN (251 aa)) folds into the Pterin-binding domain. A DHPS region spans residues 571 to 838 (VMGILNVTPN…RFEADAERED (268 aa)). Position 576 (asparagine 576) interacts with Mg(2+). (7,8-dihydropterin-6-yl)methyl diphosphate is bound by residues threonine 616, aspartate 649, asparagine 668, aspartate 738, lysine 774, and 807-809 (RVH).

It in the N-terminal section; belongs to the folylpolyglutamate synthase family. The protein in the C-terminal section; belongs to the DHPS family. Requires Mg(2+) as cofactor.

It carries out the reaction (6S)-5,6,7,8-tetrahydrofolyl-(gamma-L-Glu)(n) + L-glutamate + ATP = (6S)-5,6,7,8-tetrahydrofolyl-(gamma-L-Glu)(n+1) + ADP + phosphate + H(+). The enzyme catalyses (7,8-dihydropterin-6-yl)methyl diphosphate + 4-aminobenzoate = 7,8-dihydropteroate + diphosphate. The protein operates within cofactor biosynthesis; tetrahydrofolylpolyglutamate biosynthesis. It participates in cofactor biosynthesis; tetrahydrofolate biosynthesis; 7,8-dihydrofolate from 2-amino-4-hydroxy-6-hydroxymethyl-7,8-dihydropteridine diphosphate and 4-aminobenzoate: step 1/2. Its function is as follows. Can complement an H.volcanii mutant strain that is thymidine auxotroph because it lacks the two dihydrofolate reductase genes encoded by hdrA and hdrB. In Haloferax volcanii (strain ATCC 29605 / DSM 3757 / JCM 8879 / NBRC 14742 / NCIMB 2012 / VKM B-1768 / DS2) (Halobacterium volcanii), this protein is Probable bifunctional folylpolyglutamate synthase/dihydropteroate synthase (folCP).